We begin with the raw amino-acid sequence, 314 residues long: Malate dehydrogenase (314 aa).

Residues 11 to 16 (GSGNIG) and aspartate 35 each bind NAD(+). Residues arginine 84 and arginine 90 each contribute to the substrate site. NAD(+) contacts are provided by residues asparagine 97 and 120–122 (ITN). Positions 122 and 153 each coordinate substrate. The Proton acceptor role is filled by histidine 177.

This sequence belongs to the LDH/MDH superfamily. MDH type 3 family.

The catalysed reaction is (S)-malate + NAD(+) = oxaloacetate + NADH + H(+). Functionally, catalyzes the reversible oxidation of malate to oxaloacetate. The protein is Malate dehydrogenase of Rickettsia conorii (strain ATCC VR-613 / Malish 7).